We begin with the raw amino-acid sequence, 262 residues long: MVLIRVLANLLILQLSYAQKSSELVIGGDECNINEHNFLVALYEYWSQSFLCGGTLINGEWVLTAAHCDRTHFLIYVGVHDRSVQFDKEQRRFPKEKYFFNCGNNFTKWDKDIMLIRLNKPVRNNEHIAPLSLPSSPPSVGSVCRVMGWGQTTSPQNTLPDVPHCANINLLDYEVCRTALPQLRLPATSRILCAGVLEGGIDTCNRDSGGPLICNGEFQGIVFWGPDPCAQPDKPALYSKVFDHLDWIQSIIAGNTIVNCPP.

Positions 1–18 are cleaved as a signal peptide; sequence MVLIRVLANLLILQLSYA. A propeptide spanning residues 19–262 is cleaved from the precursor; that stretch reads QKSSELVIGG…AGNTIVNCPP (244 aa). The Peptidase S1 domain occupies 25–253; sequence VIGGDECNIN…HLDWIQSIIA (229 aa). Disulfide bonds link C31-C165, C52-C68, C102-C260, C144-C214, C176-C193, and C204-C229. The active-site Charge relay system is H67. N105 carries N-linked (GlcNAc...) asparagine glycosylation. Catalysis depends on D112, which acts as the Charge relay system. S208 (charge relay system) is an active-site residue.

This sequence belongs to the peptidase S1 family. Snake venom subfamily. In terms of assembly, monomer. In terms of tissue distribution, expressed by the venom gland.

It localises to the secreted. Its function is as follows. Thrombin-like snake venom serine protease. Displays a specificity similar to trypsin. Releases only fibrinopeptide A in the conversion of fibrinogen to fibrin. Shows coagulant, esterase and amidase activities. Reversibly increases the permeability of the blood brain barrier (BBB) in mice. Induces the barrel rotation syndrome in mice, which is manifested by gyroxin-like, rapid rolling motions. This syndrome may be due to its effect on BBB permeability, and certainly also to other actions affecting endogenous substrates present in the endothelium, nervous tissues or blood. The protein is Thrombin-like enzyme gyroxin B1.4 of Crotalus durissus terrificus (South American rattlesnake).